The chain runs to 912 residues: E3 ubiquitin-protein ligase HACE1 (912 aa).

7 ANK repeats span residues 23–55 (LPEDNETAVYTLMPMVMADQHRSVLELLSNSKF), 64–93 (VKRSLLHIAANCGSVECLVLLLKRGADPNY), 97–126 (SGCTPLHLAARNGQKKCMSKLLEYNADVNI), 130–159 (EGLTAIHWLAVNGRTELLHDLVQHVTNVDV), 163–192 (MGQTALHVACQNGHKTTVLCLLDSGADINR), 196–226 (SGATPLYFACSHGQRDTAQILLLRGAKYLPD), and 228–253 (NGVTPLDLCVQGGYGETCDILIQHHP). The region spanning 577-912 (NCEKLKQGIA…HCGSYGYTMA (336 aa)) is the HECT domain. Catalysis depends on Cys879, which acts as the Glycyl thioester intermediate.

Its subcellular location is the golgi apparatus. It is found in the golgi stack membrane. It localises to the cytoplasm. The protein resides in the endoplasmic reticulum. The catalysed reaction is S-ubiquitinyl-[E2 ubiquitin-conjugating enzyme]-L-cysteine + [acceptor protein]-L-lysine = [E2 ubiquitin-conjugating enzyme]-L-cysteine + N(6)-ubiquitinyl-[acceptor protein]-L-lysine.. It functions in the pathway protein modification; protein ubiquitination. In terms of biological role, E3 ubiquitin-protein ligase involved in Golgi membrane fusion and regulation of small GTPases. Acts as a regulator of Golgi membrane dynamics during the cell cycle: recruited to Golgi membrane by Rab proteins and regulates postmitotic Golgi membrane fusion. Acts by mediating ubiquitination during mitotic Golgi disassembly, ubiquitination serving as a signal for Golgi reassembly later, after cell division. This Xenopus tropicalis (Western clawed frog) protein is E3 ubiquitin-protein ligase HACE1 (hace1).